Here is a 243-residue protein sequence, read N- to C-terminus: Venom nerve growth factor (243 aa).

Positions 1–18 are cleaved as a signal peptide; that stretch reads MSMLCYTLIIAFLIGIWA. A propeptide spanning residues 19-125 is cleaved from the precursor; it reads APKSEDNVPL…TLNRNIWANN (107 aa). Over residues 47–66 the composition is skewed to basic and acidic residues; that stretch reads GLKTSRNTDQHHPTPKKSED. Positions 47–70 are disordered; sequence GLKTSRNTDQHHPTPKKSEDQELG. Intrachain disulfides connect cysteine 139–cysteine 204, cysteine 182–cysteine 232, and cysteine 192–cysteine 234. N-linked (GlcNAc...) asparagine glycosylation is present at asparagine 148.

It belongs to the NGF-beta family. Homodimer. Expressed by the venom gland.

The protein resides in the secreted. Its function is as follows. Nerve growth factor is important for the development and maintenance of the sympathetic and sensory nervous systems. It stimulates division and differentiation of sympathetic and embryonic sensory neurons as well as basal forebrain cholinergic neurons in the brain. Its relevance in the snake venom is not clear. However, it has been shown to inhibit metalloproteinase-dependent proteolysis of platelet glycoprotein Ib alpha, suggesting a metalloproteinase inhibition to prevent metalloprotease autodigestion and/or protection against prey proteases. Binds a lipid between the two protein chains in the homodimer. The lipid-bound form promotes histamine relase from mouse mast cells, contrary to the lipid-free form. In Bungarus multicinctus (Many-banded krait), this protein is Venom nerve growth factor.